We begin with the raw amino-acid sequence, 446 residues long: Phosphoglucosamine mutase (446 aa).

S102 (phosphoserine intermediate) is an active-site residue. Residues S102, D241, D243, and D245 each contribute to the Mg(2+) site. S102 carries the post-translational modification Phosphoserine.

It belongs to the phosphohexose mutase family. Mg(2+) serves as cofactor. Activated by phosphorylation.

The catalysed reaction is alpha-D-glucosamine 1-phosphate = D-glucosamine 6-phosphate. In terms of biological role, catalyzes the conversion of glucosamine-6-phosphate to glucosamine-1-phosphate. The protein is Phosphoglucosamine mutase of Xylella fastidiosa (strain M12).